The following is a 79-amino-acid chain: Beta-defensin 130 (79 aa).

Residues 1-22 (MKLHSLISVLLLFVTLIPKGKT) form the signal peptide. 2 disulfides stabilise this stretch: Cys-38–Cys-53 and Cys-43–Cys-60.

Belongs to the beta-defensin family.

It localises to the secreted. Functionally, antimicrobial host-defense peptide. The polypeptide is Beta-defensin 130 (Pan troglodytes (Chimpanzee)).